The chain runs to 587 residues: Ran GTPase-activating protein 1 (587 aa).

A2 is subject to N-acetylalanine. K8 is covalently cross-linked (Glycyl lysine isopeptide (Lys-Gly) (interchain with G-Cter in SUMO1); alternate). A Glycyl lysine isopeptide (Lys-Gly) (interchain with G-Cter in SUMO2); alternate cross-link involves residue K8. K15 participates in a covalent cross-link: Glycyl lysine isopeptide (Lys-Gly) (interchain with G-Cter in SUMO2). S24 carries the post-translational modification Phosphoserine. LRR repeat units lie at residues 48–71 (FDSL…VIAK), 111–134 (GAQL…GFEA), 207–230 (IGTL…ALAQ), and 235–258 (NPLL…AMAE). K279 is covalently cross-linked (Glycyl lysine isopeptide (Lys-Gly) (interchain with G-Cter in SUMO2)). 2 LRR repeats span residues 292–319 (LPKL…AMAD) and 320–343 (KAEL…QLQE). S301 carries the phosphoserine modification. Positions 357–430 (LSDDEDEEEE…EPAPVLSSPP (74 aa)) are disordered. Position 358 is a phosphoserine (S358). Residues 358-397 (SDDEDEEEEEEGEEEEEEAEEEEEEDEEEEEEEEEEEEEE) show a composition bias toward acidic residues. Polar residues predominate over residues 400 to 410 (QRGQGEKSATP). At T409 the chain carries Phosphothreonine; by CDK2. S428 and S435 each carry phosphoserine. The residue at position 436 (T436) is a Phosphothreonine. Position 442 is a phosphoserine (S442). K452 participates in a covalent cross-link: Glycyl lysine isopeptide (Lys-Gly) (interchain with G-Cter in SUMO2). The short motif at 523–526 (LKSE) is the SUMO conjugation element. K524 is covalently cross-linked (Glycyl lysine isopeptide (Lys-Gly) (interchain with G-Cter in SUMO1); alternate). K524 participates in a covalent cross-link: Glycyl lysine isopeptide (Lys-Gly) (interchain with G-Cter in SUMO2); alternate. Residue K524 is modified to N6-acetyllysine; alternate. K586 participates in a covalent cross-link: Glycyl lysine isopeptide (Lys-Gly) (interchain with G-Cter in SUMO2).

The protein belongs to the RNA1 family. In terms of assembly, homodimer. Interacts with RAN. Forms a complex with RANBP2/NUP358, NXF1 and NXT1. Forms a tight complex in association with RANBP2/NUP358 and UBE2I/UBC9, the ubiquitin-conjugating enzyme E2. Interacts with UBE2I; the interaction conjugates SUMO1 to RANGAP1, and subsequently stabilizes interactions of sumoylated RANGAP1 with RANBP2/NUP358. The complex composed of RANBP2, SUMO1, RANGAP1 and UBE2I associates with nuclear pore complexes. Identified in a complex composed of RAN, RANBP2, sumoylated RANGAP1, UBE2I and XPO1. Identified in a complex composed of RAN, RANGAP1 and RANBP1. Interacts with TRAF6. Interacts with SUMO1 and SENP1. Interacts (when sumoylated) with MYCBP2; interaction inhibits MYCBP2 E3 ubiquitin-protein ligase activity and promotes MYCBP2 translocation to the nucleus. Phosphorylation occurs before nuclear envelope breakdown and continues throughout mitosis. Phosphorylated by the M-phase kinase cyclin B/Cdk1, in vitro. Differential timimg of dephosphorylation occurs during phases of mitosis. The phosphorylated form remains associated with RANBP2/NUP358 and the SUMO E2-conjugating enzyme, UBE2I, on nuclear pore complex (NPC) diassembly and during mitosis. In terms of processing, sumoylated. Sumoylation is necessary for targeting to the nuclear envelope (NE), and for association with mitotic spindles and kinetochores during mitosis. Also required for interaction with RANBP2 and is mediated by UBE2I. Desumoylated by HINT1. In terms of tissue distribution, highly expressed in brain, thymus and testis.

It is found in the cytoplasm. The protein resides in the nucleus. The protein localises to the nucleoplasm. It localises to the nucleus envelope. Its subcellular location is the chromosome. It is found in the centromere. The protein resides in the kinetochore. The protein localises to the cytoskeleton. It localises to the spindle. Functionally, GTPase activator for RAN. Converts cytoplasmic GTP-bound RAN to GDP-bound RAN, which is essential for RAN-mediated nuclear import and export. Mediates dissociation of cargo from nuclear export complexes containing XPO1, RAN and RANBP2 after nuclear export. The chain is Ran GTPase-activating protein 1 (RANGAP1) from Homo sapiens (Human).